A 201-amino-acid polypeptide reads, in one-letter code: uncharacterized protein (201 aa).

Positions Lys-15–Gly-122 constitute a Bro-N domain.

This is an uncharacterized protein from Haemophilus influenzae (strain ATCC 51907 / DSM 11121 / KW20 / Rd).